The chain runs to 129 residues: Glycine cleavage system H protein (129 aa).

The Lipoyl-binding domain occupies 24-106; the sequence is LIRVGISAFA…HGAGWLLVVR (83 aa). An N6-lipoyllysine modification is found at K65.

Belongs to the GcvH family. As to quaternary structure, the glycine cleavage system is composed of four proteins: P, T, L and H. (R)-lipoate is required as a cofactor.

In terms of biological role, the glycine cleavage system catalyzes the degradation of glycine. The H protein shuttles the methylamine group of glycine from the P protein to the T protein. In Synechococcus sp. (strain CC9902), this protein is Glycine cleavage system H protein.